The chain runs to 672 residues: Beta-galactosidase BgaB (672 aa).

Position 109 (R109) interacts with substrate. Zn(2+) is bound at residue C113. N147 contributes to the substrate binding site. Catalysis depends on E148, which acts as the Proton donor. 3 residues coordinate Zn(2+): C156, C158, and C161. Residue E303 is the Nucleophile of the active site. Residues W311 and 351 to 354 (EKFH) each bind substrate.

This sequence belongs to the glycosyl hydrolase 42 family.

It catalyses the reaction Hydrolysis of terminal non-reducing beta-D-galactose residues in beta-D-galactosides.. The protein is Beta-galactosidase BgaB of Geobacillus sp. (strain Y412MC61).